The sequence spans 269 residues: Monofunctional glycosyltransferase (269 aa).

The chain crosses the membrane as a helical span at residues 46-66 (AIITILILLIIFFGVMYFISS).

This sequence belongs to the glycosyltransferase 51 family.

It is found in the cell membrane. It carries out the reaction [GlcNAc-(1-&gt;4)-Mur2Ac(oyl-L-Ala-gamma-D-Glu-L-Lys-D-Ala-D-Ala)](n)-di-trans,octa-cis-undecaprenyl diphosphate + beta-D-GlcNAc-(1-&gt;4)-Mur2Ac(oyl-L-Ala-gamma-D-Glu-L-Lys-D-Ala-D-Ala)-di-trans,octa-cis-undecaprenyl diphosphate = [GlcNAc-(1-&gt;4)-Mur2Ac(oyl-L-Ala-gamma-D-Glu-L-Lys-D-Ala-D-Ala)](n+1)-di-trans,octa-cis-undecaprenyl diphosphate + di-trans,octa-cis-undecaprenyl diphosphate + H(+). The protein operates within cell wall biogenesis; peptidoglycan biosynthesis. Its function is as follows. Peptidoglycan polymerase that catalyzes glycan chain elongation using lipid-linked disaccharide-pentapeptide as the substrate. The polypeptide is Monofunctional glycosyltransferase (Staphylococcus epidermidis (strain ATCC 35984 / DSM 28319 / BCRC 17069 / CCUG 31568 / BM 3577 / RP62A)).